Here is a 650-residue protein sequence, read N- to C-terminus: MSKTVKKFETEVQQLLDLVIHSLYSNKDIFLRELISNASDAIDKVLFESHQNAAVIEGEPEGKIKLIPDKDAGTLTIRDNGVGMTLEEVEKNIGTIAHSGTKAFLANLKEQNVADHPELIGQFGVGFYASFMVADRVTLVTRRAGHDKAAGVRWESTGDGTYTVEECAKETRGTEITLHLKEEMKEYLDEWKIRSIVRKYSDYVQYPIVMDVTRTEVPKGVNGEEIEGAGTIEKTEEETLNSMKAIWTRSKSEVTEEEYEEFYKHVSHDFEKPLKTIHYSAEGTSEFKALLYLPAHKPFDLFMPERKKGVQLYVRRVFITDSCEQLLPDYLRFVKGVVDSSDLPLNVSREILQEDVQIKRIQKSLVSKILSTLSEMREKEADSYLDFYKEFGPVLKEGVHFDYANRDKLQDLLLFESTATDAGSFVSLKEYVERMPEGQEEIYFITGTSRAALEQSPHLEIFRKKGYEVLFLTDPVDEWVVQGLPEYGGKKLKAVDRGDVIPATEEEKKEQEAKREEAAKQYGDLLSFVKEKLAERVKEVRLSNRLTDSACCLVADEHGLNANMERILRAMNQTVPESKRILELNPDHPIMQVMATLFGKDKTNPRLADYCDLLYDQALLTEGSPIADPLRFTRLVAELMVADGKAAAGE.

Residues 1 to 349 (MSKTVKKFET…SSDLPLNVSR (349 aa)) form an a; substrate-binding region. The b stretch occupies residues 350-566 (EILQEDVQIK…EHGLNANMER (217 aa)). Positions 567–650 (ILRAMNQTVP…VADGKAAAGE (84 aa)) are c.

The protein belongs to the heat shock protein 90 family. In terms of assembly, homodimer.

The protein resides in the cytoplasm. Functionally, molecular chaperone. Has ATPase activity. The protein is Chaperone protein HtpG of Geobacter sulfurreducens (strain ATCC 51573 / DSM 12127 / PCA).